Consider the following 490-residue polypeptide: Ribulose bisphosphate carboxylase large chain (490 aa).

Residues asparagine 127 and threonine 177 each contribute to the substrate site. Lysine 179 functions as the Proton acceptor in the catalytic mechanism. Residue lysine 181 participates in substrate binding. Mg(2+)-binding residues include lysine 205, aspartate 207, and glutamate 208. Lysine 205 bears the N6-carboxylysine mark. The active-site Proton acceptor is histidine 297. Substrate contacts are provided by arginine 298, histidine 330, and serine 382.

The protein belongs to the RuBisCO large chain family. Type I subfamily. Heterohexadecamer of 8 large chains and 8 small chains. Mg(2+) serves as cofactor.

It is found in the plastid. The protein resides in the chloroplast. It carries out the reaction 2 (2R)-3-phosphoglycerate + 2 H(+) = D-ribulose 1,5-bisphosphate + CO2 + H2O. The enzyme catalyses D-ribulose 1,5-bisphosphate + O2 = 2-phosphoglycolate + (2R)-3-phosphoglycerate + 2 H(+). In terms of biological role, ruBisCO catalyzes two reactions: the carboxylation of D-ribulose 1,5-bisphosphate, the primary event in carbon dioxide fixation, as well as the oxidative fragmentation of the pentose substrate in the photorespiration process. Both reactions occur simultaneously and in competition at the same active site. The chain is Ribulose bisphosphate carboxylase large chain from Phaeodactylum tricornutum (strain CCAP 1055/1).